Here is a 452-residue protein sequence, read N- to C-terminus: Bifunctional protein GlmU (452 aa).

Residues 1 to 232 are pyrophosphorylase; sequence MTARNSLTIV…EDEVRGINTK (232 aa). Residues 11–14, K25, Q78, and 83–84 contribute to the UDP-N-acetyl-alpha-D-glucosamine site; these read LAAG and GT. A Mg(2+)-binding site is contributed by D108. Positions 144, 158, 173, and 230 each coordinate UDP-N-acetyl-alpha-D-glucosamine. N230 is a Mg(2+) binding site. The interval 233 to 253 is linker; sequence AQLAEAETVMQTRLRLAAMAA. The segment at 254 to 452 is N-acetyltransferase; the sequence is GVTLIAPETV…KSRHRKPKAH (199 aa). UDP-N-acetyl-alpha-D-glucosamine is bound by residues R319 and K337. H349 (proton acceptor) is an active-site residue. Y352 and N363 together coordinate UDP-N-acetyl-alpha-D-glucosamine. Residues A366, 372–373, S391, S409, and R426 contribute to the acetyl-CoA site; that span reads NY.

It in the N-terminal section; belongs to the N-acetylglucosamine-1-phosphate uridyltransferase family. The protein in the C-terminal section; belongs to the transferase hexapeptide repeat family. As to quaternary structure, homotrimer. It depends on Mg(2+) as a cofactor.

The protein localises to the cytoplasm. The enzyme catalyses alpha-D-glucosamine 1-phosphate + acetyl-CoA = N-acetyl-alpha-D-glucosamine 1-phosphate + CoA + H(+). It catalyses the reaction N-acetyl-alpha-D-glucosamine 1-phosphate + UTP + H(+) = UDP-N-acetyl-alpha-D-glucosamine + diphosphate. Its pathway is nucleotide-sugar biosynthesis; UDP-N-acetyl-alpha-D-glucosamine biosynthesis; N-acetyl-alpha-D-glucosamine 1-phosphate from alpha-D-glucosamine 6-phosphate (route II): step 2/2. It functions in the pathway nucleotide-sugar biosynthesis; UDP-N-acetyl-alpha-D-glucosamine biosynthesis; UDP-N-acetyl-alpha-D-glucosamine from N-acetyl-alpha-D-glucosamine 1-phosphate: step 1/1. The protein operates within bacterial outer membrane biogenesis; LPS lipid A biosynthesis. Functionally, catalyzes the last two sequential reactions in the de novo biosynthetic pathway for UDP-N-acetylglucosamine (UDP-GlcNAc). The C-terminal domain catalyzes the transfer of acetyl group from acetyl coenzyme A to glucosamine-1-phosphate (GlcN-1-P) to produce N-acetylglucosamine-1-phosphate (GlcNAc-1-P), which is converted into UDP-GlcNAc by the transfer of uridine 5-monophosphate (from uridine 5-triphosphate), a reaction catalyzed by the N-terminal domain. In Rhodopseudomonas palustris (strain TIE-1), this protein is Bifunctional protein GlmU.